The sequence spans 143 residues: MQCNINDIIKILPHSYPFLLVDRVIECDPGMSIKAIKNVTFNEQFFIGHFPGHPIMPGVLIIESLAQASAICVLGKKTVENKVVYFMSIENAKFRKPVTPGDTLILQSNFEGLRLGVYKFKCVASVGKEEVAGATILAKLQDK.

Residue His-49 is part of the active site.

It belongs to the thioester dehydratase family. FabZ subfamily.

It localises to the cytoplasm. It carries out the reaction a (3R)-hydroxyacyl-[ACP] = a (2E)-enoyl-[ACP] + H2O. Functionally, involved in unsaturated fatty acids biosynthesis. Catalyzes the dehydration of short chain beta-hydroxyacyl-ACPs and long chain saturated and unsaturated beta-hydroxyacyl-ACPs. The sequence is that of 3-hydroxyacyl-[acyl-carrier-protein] dehydratase FabZ from Wolbachia pipientis subsp. Culex pipiens (strain wPip).